A 527-amino-acid chain; its full sequence is GMP synthase [glutamine-hydrolyzing] (527 aa).

Positions 4–202 (KILILDFGSQ…VLKICGAQPD (199 aa)) constitute a Glutamine amidotransferase type-1 domain. Cys81 acts as the Nucleophile in catalysis. Catalysis depends on residues His176 and Glu178. The GMPS ATP-PPase domain maps to 203 to 395 (WEMGHYIDEA…LGLPPAMVYR (193 aa)). 230-236 (SGGVDSS) lines the ATP pocket.

Homodimer.

It catalyses the reaction XMP + L-glutamine + ATP + H2O = GMP + L-glutamate + AMP + diphosphate + 2 H(+). Its pathway is purine metabolism; GMP biosynthesis; GMP from XMP (L-Gln route): step 1/1. In terms of biological role, catalyzes the synthesis of GMP from XMP. In Paraburkholderia xenovorans (strain LB400), this protein is GMP synthase [glutamine-hydrolyzing].